A 218-amino-acid polypeptide reads, in one-letter code: Small ribosomal subunit protein uS3c (218 aa).

The 72-residue stretch at 47–118 folds into the KH type-2 domain; that stretch reads VQKNMRTSSG…KLNIAVTRIA (72 aa).

It belongs to the universal ribosomal protein uS3 family. In terms of assembly, part of the 30S ribosomal subunit.

It is found in the plastid. Its subcellular location is the chloroplast. This chain is Small ribosomal subunit protein uS3c (rps3), found in Atropa belladonna (Belladonna).